Reading from the N-terminus, the 118-residue chain is Large ribosomal subunit protein bL19 (118 aa).

It belongs to the bacterial ribosomal protein bL19 family.

Its function is as follows. This protein is located at the 30S-50S ribosomal subunit interface and may play a role in the structure and function of the aminoacyl-tRNA binding site. The sequence is that of Large ribosomal subunit protein bL19 from Frankia alni (strain DSM 45986 / CECT 9034 / ACN14a).